A 205-amino-acid chain; its full sequence is ATP-dependent Clp protease proteolytic subunit (205 aa).

Ser108 functions as the Nucleophile in the catalytic mechanism. The active site involves His133.

It belongs to the peptidase S14 family. As to quaternary structure, fourteen ClpP subunits assemble into 2 heptameric rings which stack back to back to give a disk-like structure with a central cavity, resembling the structure of eukaryotic proteasomes.

It localises to the cytoplasm. The enzyme catalyses Hydrolysis of proteins to small peptides in the presence of ATP and magnesium. alpha-casein is the usual test substrate. In the absence of ATP, only oligopeptides shorter than five residues are hydrolyzed (such as succinyl-Leu-Tyr-|-NHMec, and Leu-Tyr-Leu-|-Tyr-Trp, in which cleavage of the -Tyr-|-Leu- and -Tyr-|-Trp bonds also occurs).. Cleaves peptides in various proteins in a process that requires ATP hydrolysis. Has a chymotrypsin-like activity. Plays a major role in the degradation of misfolded proteins. The protein is ATP-dependent Clp protease proteolytic subunit of Alcanivorax borkumensis (strain ATCC 700651 / DSM 11573 / NCIMB 13689 / SK2).